The following is a 572-amino-acid chain: Urease subunit alpha (572 aa).

The region spanning 136-572 (GGIDTHIHFI…VPLGQRYFLF (437 aa)) is the Urease domain. Ni(2+) contacts are provided by histidine 141, histidine 143, and lysine 224. At lysine 224 the chain carries N6-carboxylysine. Residue histidine 226 coordinates substrate. 2 residues coordinate Ni(2+): histidine 253 and histidine 279. Catalysis depends on histidine 327, which acts as the Proton donor. Aspartate 367 lines the Ni(2+) pocket.

Belongs to the metallo-dependent hydrolases superfamily. Urease alpha subunit family. In terms of assembly, heterotrimer of UreA (gamma), UreB (beta) and UreC (alpha) subunits. Three heterotrimers associate to form the active enzyme. Ni cation serves as cofactor. In terms of processing, carboxylation allows a single lysine to coordinate two nickel ions.

The protein localises to the cytoplasm. The catalysed reaction is urea + 2 H2O + H(+) = hydrogencarbonate + 2 NH4(+). Its pathway is nitrogen metabolism; urea degradation; CO(2) and NH(3) from urea (urease route): step 1/1. The sequence is that of Urease subunit alpha from Haemophilus influenzae (strain PittGG).